We begin with the raw amino-acid sequence, 164 residues long: Endoribonuclease YbeY (164 aa).

Positions 111, 115, and 121 each coordinate Zn(2+). The interval 142-164 (GYPDPYADDETETSPTVTTKDSE) is disordered. Residues 154–164 (TSPTVTTKDSE) show a composition bias toward polar residues.

This sequence belongs to the endoribonuclease YbeY family. Requires Zn(2+) as cofactor.

It is found in the cytoplasm. Its function is as follows. Single strand-specific metallo-endoribonuclease involved in late-stage 70S ribosome quality control and in maturation of the 3' terminus of the 16S rRNA. The polypeptide is Endoribonuclease YbeY (Pseudomonas fluorescens (strain Pf0-1)).